The chain runs to 380 residues: MIQAQTLQHFGNGAREGDQSYFDPGAPPPFKIADIRAAIPKHCWEKSTLRSLSYVLRDVLVVTALAASAISFNSWFFWPLYWPAQGTMFWALFVLGHDCGHGSFSNSSKLNSFVGHILHSLILVPYNGWRISHRTHHQNHGHVEKDESWVPLTEKVYKNLDDMTRMLRYSFPFPIFAYPFYLWNRSPGKEGSHFNPYSNLFSPGERKGVVTSTLCWGIVLSVLLYLSLTIGPIFMLKLYGVPYLIFVMWLDFVTYLHHHGYTHKLPWYRGQEWSYLRGGLTTVDRDYGWINNVHHDIGTHVIHHLFPQIPHYHLVEATKSAKSVLGKYYREPQKSGPLPFHLLKYLLQSISQDHFVSDTGDIVYYQTDPKLHQDSWTKSK.

The chain crosses the membrane as a helical span at residues 59 to 78 (VLVVTALAASAISFNSWFFW). Residues 97-101 (HDCGH) carry the Histidine box-1 motif. The Histidine box-2 motif lies at 133–137 (HRTHH). A run of 2 helical transmembrane segments spans residues 208–231 (GVVTSTLCWGIVLSVLLYLSLTIG) and 238–256 (LYGVPYLIFVMWLDFVTYL). The Histidine box-3 signature appears at 300 to 304 (HVIHH).

It belongs to the fatty acid desaturase type 1 family.

Its subcellular location is the endoplasmic reticulum membrane. The protein operates within lipid metabolism; polyunsaturated fatty acid biosynthesis. In terms of biological role, microsomal (ER) omega-3 fatty acid desaturase introduces the third double bond in the biosynthesis of 18:3 fatty acids, important constituents of plant membranes. It is thought to use cytochrome b5 as an electron donor and to act on fatty acids esterified to phosphatidylcholine and, possibly, other phospholipids. The sequence is that of Omega-3 fatty acid desaturase, endoplasmic reticulum (ARG1) from Vigna radiata var. radiata (Mung bean).